Reading from the N-terminus, the 460-residue chain is 2-methylcitrate synthase, mitochondrial (460 aa).

The N-terminal 24 residues, 1–24, are a transit peptide targeting the mitochondrion; the sequence is MALPLRTARHASRLAQTIGRRGYA. CoA-binding residues include Arg69 and Lys187. Position 264 (His264) interacts with oxaloacetate. Position 299 (Leu299) interacts with CoA. Residue His300 is part of the active site. Val341, Gly343, and Tyr344 together coordinate CoA. Positions 346 and 355 each coordinate oxaloacetate. His346 is a catalytic residue. The CoA site is built by Thr395, Lys396, and Asn401. Asp403 is an active-site residue. Oxaloacetate contacts are provided by Arg429 and Arg449.

It belongs to the citrate synthase family. Homodimer.

The protein resides in the mitochondrion matrix. The catalysed reaction is propanoyl-CoA + oxaloacetate + H2O = (2S,3S)-2-methylcitrate + CoA + H(+). It carries out the reaction oxaloacetate + acetyl-CoA + H2O = citrate + CoA + H(+). It functions in the pathway organic acid metabolism; propanoate degradation. With respect to regulation, partially inhibited by ATP. Functionally, catalyzes the synthesis of (2S,3S)-2-methylcitrate from propionyl-CoA and oxaloacetate and also from acetyl-CoA and oxaloacetate with a greater efficiency. Also has citrate synthase activity and can substitute for the loss of citA activity. This Emericella nidulans (strain FGSC A4 / ATCC 38163 / CBS 112.46 / NRRL 194 / M139) (Aspergillus nidulans) protein is 2-methylcitrate synthase, mitochondrial.